Here is a 177-residue protein sequence, read N- to C-terminus: B-phycoerythrin beta chain (177 aa).

Phycourobilin contacts are provided by C50 and C61. At N72 the chain carries N4-methylasparagine. The (2R,3E)-phycoerythrobilin site is built by C82 and C158.

It belongs to the phycobiliprotein family. Heteromer of 6 alpha, 6 beta and one gamma chain. Contains two covalently linked phycoerythrobilin chromophores and one covalently linked phycourobilin chromophore.

Its subcellular location is the plastid. The protein resides in the chloroplast thylakoid membrane. Light-harvesting photosynthetic bile pigment-protein from the phycobiliprotein complex. The sequence is that of B-phycoerythrin beta chain (cpeB) from Porphyridium purpureum (Red alga).